Here is a 448-residue protein sequence, read N- to C-terminus: Exodeoxyribonuclease 7 large subunit (448 aa).

It belongs to the XseA family. Heterooligomer composed of large and small subunits.

It is found in the cytoplasm. It catalyses the reaction Exonucleolytic cleavage in either 5'- to 3'- or 3'- to 5'-direction to yield nucleoside 5'-phosphates.. Its function is as follows. Bidirectionally degrades single-stranded DNA into large acid-insoluble oligonucleotides, which are then degraded further into small acid-soluble oligonucleotides. This chain is Exodeoxyribonuclease 7 large subunit, found in Shewanella sp. (strain MR-4).